Reading from the N-terminus, the 361-residue chain is Endo-1,4-beta-xylanase 2 (361 aa).

The signal sequence occupies residues 1-26 (MHFSTITAALALLGLGAATPTDYSTS). Residues 46–354 (IGTALTIRDD…KPAYSSVLKT (309 aa)) enclose the GH10 domain. Asn-88 and Asn-130 each carry an N-linked (GlcNAc...) asparagine glycan. The active-site Proton donor is Glu-160. The active-site Nucleophile is Glu-276. Cys-304 and Cys-310 are oxidised to a cystine.

This sequence belongs to the glycosyl hydrolase 10 (cellulase F) family.

It is found in the secreted. The enzyme catalyses Endohydrolysis of (1-&gt;4)-beta-D-xylosidic linkages in xylans.. It functions in the pathway glycan degradation; xylan degradation. Endo-1,4-beta-xylanase involved in the hydrolysis of xylan, a major structural heterogeneous polysaccharide found in plant biomass representing the second most abundant polysaccharide in the biosphere, after cellulose. Hydrolyzes birch-wood xylan, with a similar activity toward oat-spelt xylan. Also shows weak activities toward pNP-beta-D-cellobioside and pNP-beta-D-xylopyranoside, but no detectable activity toward carboxymethyl cellulose and pNP-beta-L-arabinofuranoside.-. The protein is Endo-1,4-beta-xylanase 2 (xynII) of Aureobasidium pullulans (Black yeast).